We begin with the raw amino-acid sequence, 146 residues long: Histone H2A.1 (146 aa).

The residue at position 1 (methionine 1) is an N-acetylmethionine. The disordered stretch occupies residues 1-24 (MDATKTTKGAGGRKGGPRKKSVTK). Residues 142 to 145 (SPKK) carry the SPKK motif motif.

Belongs to the histone H2A family. In terms of assembly, the nucleosome is a histone octamer containing two molecules each of H2A, H2B, H3 and H4 assembled in one H3-H4 heterotetramer and two H2A-H2B heterodimers. The octamer wraps approximately 147 bp of DNA. In terms of tissue distribution, high expression in meristematic tissues, in cells of the root pericycle and in shoot cortical cells undergoing endoduplication of their DNA.

It is found in the nucleus. Its subcellular location is the chromosome. Core component of nucleosome. Nucleosomes wrap and compact DNA into chromatin, limiting DNA accessibility to the cellular machineries which require DNA as a template. Histones thereby play a central role in transcription regulation, DNA repair, DNA replication and chromosomal stability. DNA accessibility is regulated via a complex set of post-translational modifications of histones, also called histone code, and nucleosome remodeling. This chain is Histone H2A.1, found in Solanum lycopersicum (Tomato).